The chain runs to 235 residues: MTVLAPAWSPTTYLLLLLLLSSGLSGTQDCSFQHSPISSDFAVKIRELSDYLLQDYPVTVASNLQDEELCGGLWRLVLAQRWMERLKTVAGSKMQGLLERVNTEIHFVTKCAFQPPPSCLRFVQTNISRLLQETSEQLVALKPWITRQNFSRCLELQCQPDSSTLPPPWSPRPLEATAPTAPQPPLLLLLLLPVGLLLLAAAWCLHWQRTRRRTPRPGEQVPPVPSPQDLLLVEH.

The N-terminal stretch at 1–26 (MTVLAPAWSPTTYLLLLLLLSSGLSG) is a signal peptide. Over 27–184 (TQDCSFQHSP…EATAPTAPQP (158 aa)) the chain is Extracellular. 3 cysteine pairs are disulfide-bonded: Cys-30-Cys-111, Cys-70-Cys-153, and Cys-119-Cys-158. N-linked (GlcNAc...) asparagine glycans are attached at residues Asn-126 and Asn-149. A helical transmembrane segment spans residues 185 to 205 (PLLLLLLLPVGLLLLAAAWCL). The Cytoplasmic segment spans residues 206–235 (HWQRTRRRTPRPGEQVPPVPSPQDLLLVEH). Residues 213 to 235 (RTPRPGEQVPPVPSPQDLLLVEH) are disordered.

As to quaternary structure, homodimer (isoform 2).

The protein localises to the cell membrane. Its subcellular location is the secreted. Functionally, stimulates the proliferation of early hematopoietic cells by activating FLT3. Synergizes well with a number of other colony stimulating factors and interleukins. Required for the development of B cells, and dendritic cells (DCs). This Homo sapiens (Human) protein is Fms-related tyrosine kinase 3 ligand (FLT3LG).